A 236-amino-acid polypeptide reads, in one-letter code: 7-cyano-7-deazaguanine synthase (236 aa).

7–17 serves as a coordination point for ATP; that stretch reads CSGGLDSVSLA. The Zn(2+) site is built by Cys185, Cys193, Cys196, and Cys199.

Belongs to the QueC family. The cofactor is Zn(2+).

It carries out the reaction 7-carboxy-7-deazaguanine + NH4(+) + ATP = 7-cyano-7-deazaguanine + ADP + phosphate + H2O + H(+). It functions in the pathway purine metabolism; 7-cyano-7-deazaguanine biosynthesis. Its function is as follows. Catalyzes the ATP-dependent conversion of 7-carboxy-7-deazaguanine (CDG) to 7-cyano-7-deazaguanine (preQ(0)). The polypeptide is 7-cyano-7-deazaguanine synthase (Rhizobium etli (strain ATCC 51251 / DSM 11541 / JCM 21823 / NBRC 15573 / CFN 42)).